Consider the following 150-residue polypeptide: Cytochrome b5 type B (150 aa).

A propeptide spanning residues 1–15 (MSGSMATAEASGSDG) is cleaved from the precursor. Positions 1-20 (MSGSMATAEASGSDGKGQEV) are disordered. Serine 23 carries the post-translational modification Phosphoserine. Residues 24–100 (VTYYRLEEVA…LKQYYIGDIH (77 aa)) form the Cytochrome b5 heme-binding domain. Lysine 34 is subject to N6-acetyllysine. Position 37 is a phosphoserine (serine 37). Lysine 39 carries the post-translational modification N6-methyllysine. 2 residues coordinate heme: histidine 59 and histidine 83. Phosphoserine is present on serine 84. A helical membrane pass occupies residues 123 to 140 (WAYWILPIIGAVLLGFLY).

This sequence belongs to the cytochrome b5 family. Component of a complex composed of cytochrome b5, NADH-cytochrome b5 reductase (CYB5R3) and MTARC2.

Its subcellular location is the mitochondrion outer membrane. Its function is as follows. Cytochrome b5 is a membrane-bound hemoprotein functioning as an electron carrier for several membrane-bound oxygenases. This is Cytochrome b5 type B (CYB5B) from Homo sapiens (Human).